Reading from the N-terminus, the 507-residue chain is Ribonuclease Y (507 aa).

Residues 1–21 (MLWYIVAGAGGLLIGYLIASY) form a helical membrane-spanning segment. One can recognise a KH domain in the interval 197–282 (TVSTVSLPSD…EMYEKAKQEV (86 aa)). Positions 323–416 (VLNHSIEVAL…VAAADALSAA (94 aa)) constitute an HD domain.

This sequence belongs to the RNase Y family.

It is found in the cell membrane. Its function is as follows. Endoribonuclease that initiates mRNA decay. The chain is Ribonuclease Y from Thermotoga petrophila (strain ATCC BAA-488 / DSM 13995 / JCM 10881 / RKU-1).